We begin with the raw amino-acid sequence, 305 residues long: Flagellin FlaB2 (305 aa).

The propeptide at 1–18 (MGLQKIVKKYNKKMKRKG) is propeptide.

This sequence belongs to the archaeal flagellin family. In terms of processing, glycosylated.

The protein resides in the archaeal flagellum. In terms of biological role, flagellin is the subunit protein which polymerizes to form the filaments of archaeal flagella. In Saccharolobus shibatae (strain ATCC 51178 / DSM 5389 / JCM 8931 / NBRC 15437 / B12) (Sulfolobus shibatae), this protein is Flagellin FlaB2.